Here is a 125-residue protein sequence, read N- to C-terminus: Cu-Zn superoxide dismutase-like protein OPG175 (125 aa).

Cys-52 and Cys-102 are disulfide-bonded.

It belongs to the Cu-Zn superoxide dismutase family.

It is found in the virion. The protein resides in the host cytoplasm. Superoxide dismutase-like protein with no enzymatic activity. In Homo sapiens (Human), this protein is Cu-Zn superoxide dismutase-like protein OPG175 (OPG175).